The following is a 174-amino-acid chain: Caltractin ICL1e (174 aa).

Residues 1-33 (MSKKQQAPVAQKPVGKQQQVNRKPQDRPGLTED) are disordered. EF-hand domains lie at 33–68 (DEIEEIKEAFNLFDTEGTGRVDPRELKAAMQSLGFD), 88–103 (IDFDQFLDAITSKLGN), 105–140 (ESRDGINKIFDLFDDDGSNSINLNNLKRVSKELGET), and 141–174 (MTAEELAEMLERAASNGRDISREDFYNIMVKRTF).

This sequence belongs to the centrin family. In terms of assembly, monomer.

Its subcellular location is the cytoplasm. It is found in the cytoskeleton. In terms of biological role, plays a fundamental role in microtubule organizing center structure and function. Component of the infraciliary lattice (ICL) and the ciliary basal bodies. This chain is Caltractin ICL1e (Icl1e), found in Paramecium tetraurelia.